A 245-amino-acid polypeptide reads, in one-letter code: Carbohydrate deacetylase (245 aa).

Mg(2+) contacts are provided by His-59 and His-125.

This sequence belongs to the YdjC deacetylase family. In terms of assembly, homodimer. Mg(2+) is required as a cofactor.

Its function is as follows. Probably catalyzes the deacetylation of acetylated carbohydrates an important step in the degradation of oligosaccharides. The protein is Carbohydrate deacetylase of Listeria welshimeri serovar 6b (strain ATCC 35897 / DSM 20650 / CCUG 15529 / CIP 8149 / NCTC 11857 / SLCC 5334 / V8).